The sequence spans 502 residues: Probable glycine dehydrogenase (decarboxylating) subunit 2 (502 aa).

N6-(pyridoxal phosphate)lysine is present on Lys-273.

Belongs to the GcvP family. C-terminal subunit subfamily. As to quaternary structure, the glycine cleavage system is composed of four proteins: P, T, L and H. In this organism, the P 'protein' is a heterodimer of two subunits. Pyridoxal 5'-phosphate serves as cofactor.

The enzyme catalyses N(6)-[(R)-lipoyl]-L-lysyl-[glycine-cleavage complex H protein] + glycine + H(+) = N(6)-[(R)-S(8)-aminomethyldihydrolipoyl]-L-lysyl-[glycine-cleavage complex H protein] + CO2. The glycine cleavage system catalyzes the degradation of glycine. The P protein binds the alpha-amino group of glycine through its pyridoxal phosphate cofactor; CO(2) is released and the remaining methylamine moiety is then transferred to the lipoamide cofactor of the H protein. In Thermococcus onnurineus (strain NA1), this protein is Probable glycine dehydrogenase (decarboxylating) subunit 2.